The primary structure comprises 606 residues: DNA mismatch repair protein MutL (606 aa).

Residues Gly-350–Gln-371 are disordered.

Belongs to the DNA mismatch repair MutL/HexB family.

Functionally, this protein is involved in the repair of mismatches in DNA. It is required for dam-dependent methyl-directed DNA mismatch repair. May act as a 'molecular matchmaker', a protein that promotes the formation of a stable complex between two or more DNA-binding proteins in an ATP-dependent manner without itself being part of a final effector complex. The chain is DNA mismatch repair protein MutL from Rhizobium rhizogenes (strain K84 / ATCC BAA-868) (Agrobacterium radiobacter).